The chain runs to 345 residues: NADH-quinone oxidoreductase subunit H (345 aa).

8 helical membrane-spanning segments follow: residues 13–33 (VIIL…LLFL), 84–104 (FILA…VIPF), 115–135 (VAIL…IMGG), 161–181 (IGLI…GDIV), 190–210 (LFNW…ISCL), 248–268 (YIAI…GWLS), 277–297 (PLWM…VKAI), and 309–329 (LGWK…AFAA).

The protein belongs to the complex I subunit 1 family. As to quaternary structure, NDH-1 is composed of 14 different subunits. Subunits NuoA, H, J, K, L, M, N constitute the membrane sector of the complex.

Its subcellular location is the cell inner membrane. It carries out the reaction a quinone + NADH + 5 H(+)(in) = a quinol + NAD(+) + 4 H(+)(out). In terms of biological role, NDH-1 shuttles electrons from NADH, via FMN and iron-sulfur (Fe-S) centers, to quinones in the respiratory chain. The immediate electron acceptor for the enzyme in this species is believed to be ubiquinone. Couples the redox reaction to proton translocation (for every two electrons transferred, four hydrogen ions are translocated across the cytoplasmic membrane), and thus conserves the redox energy in a proton gradient. This subunit may bind ubiquinone. In Ruegeria sp. (strain TM1040) (Silicibacter sp.), this protein is NADH-quinone oxidoreductase subunit H.